The chain runs to 660 residues: Galactocerebrosidase (660 aa).

A signal peptide spans 1–18; sequence MQTHNFLCIISVILGCSA. Threonine 87 and tryptophan 129 together coordinate substrate. N-linked (GlcNAc...) asparagine glycosylation is present at asparagine 147. Asparagine 175 provides a ligand contact to substrate. The active-site Proton donor/acceptor is the glutamate 176. The active-site Nucleophile is the glutamate 251. Cysteines 264 and 371 form a disulfide. N-linked (GlcNAc...) asparagine glycans are attached at residues asparagine 293 and asparagine 356. Residue arginine 373 coordinates substrate. N-linked (GlcNAc...) asparagine glycosylation is found at asparagine 413, asparagine 465, asparagine 495, asparagine 499, asparagine 537, and asparagine 578.

The protein belongs to the glycosyl hydrolase 59 family.

The protein resides in the lysosome. The enzyme catalyses a beta-D-galactosyl-(1&lt;-&gt;1')-N-acylsphing-4-enine + H2O = an N-acylsphing-4-enine + D-galactose. The catalysed reaction is beta-D-galactosyl-(1&lt;-&gt;1)-sphing-4-enine + H2O = sphing-4-enine + D-galactose. It catalyses the reaction a D-galactosylceramide + H2O = an N-acyl-sphingoid base + D-galactose. Its function is as follows. Hydrolyzes the galactose ester bonds of glycolipids such as galactosylceramide and galactosylsphingosine. This chain is Galactocerebrosidase, found in Danio rerio (Zebrafish).